Here is a 102-residue protein sequence, read N- to C-terminus: Small ribosomal subunit protein uS10 (102 aa).

It belongs to the universal ribosomal protein uS10 family. As to quaternary structure, part of the 30S ribosomal subunit.

Involved in the binding of tRNA to the ribosomes. The polypeptide is Small ribosomal subunit protein uS10 (Lactobacillus gasseri (strain ATCC 33323 / DSM 20243 / BCRC 14619 / CIP 102991 / JCM 1131 / KCTC 3163 / NCIMB 11718 / NCTC 13722 / AM63)).